A 546-amino-acid chain; its full sequence is Glucose-6-phosphate isomerase (546 aa).

The Proton donor role is filled by glutamate 353. Catalysis depends on residues histidine 384 and lysine 512.

It belongs to the GPI family.

Its subcellular location is the cytoplasm. The catalysed reaction is alpha-D-glucose 6-phosphate = beta-D-fructose 6-phosphate. Its pathway is carbohydrate biosynthesis; gluconeogenesis. The protein operates within carbohydrate degradation; glycolysis; D-glyceraldehyde 3-phosphate and glycerone phosphate from D-glucose: step 2/4. In terms of biological role, catalyzes the reversible isomerization of glucose-6-phosphate to fructose-6-phosphate. The polypeptide is Glucose-6-phosphate isomerase (Actinobacillus pleuropneumoniae serotype 5b (strain L20)).